We begin with the raw amino-acid sequence, 540 residues long: RNA exonuclease 3 (540 aa).

The C3H1-type zinc-finger motif lies at 7-34; that stretch reads QFKHIVCPFLRTGRKCQSRNCFFSHDFQ. The Exonuclease domain maps to 382 to 529; the sequence is HCALDCELCY…EDAVSALQLV (148 aa).

This sequence belongs to the REXO1/REXO3 family.

It is found in the cytoplasm. It localises to the nucleus. 3' to 5' exoribonuclease required for proper 3' end maturation of MRP RNA and of the U5L snRNA. The protein is RNA exonuclease 3 (rex3) of Schizosaccharomyces pombe (strain 972 / ATCC 24843) (Fission yeast).